The chain runs to 210 residues: Outer-membrane lipoprotein LolB (210 aa).

The signal sequence occupies residues 1–29; that stretch reads MSLISNNEERSLRVRYCIAIALSALLISG. Cys-30 carries the N-palmitoyl cysteine lipid modification. Residue Cys-30 is the site of S-diacylglycerol cysteine attachment.

This sequence belongs to the LolB family. In terms of assembly, monomer.

Its subcellular location is the cell outer membrane. Its function is as follows. Plays a critical role in the incorporation of lipoproteins in the outer membrane after they are released by the LolA protein. This is Outer-membrane lipoprotein LolB from Coxiella burnetii (strain CbuG_Q212) (Coxiella burnetii (strain Q212)).